Here is a 234-residue protein sequence, read N- to C-terminus: uncharacterized protein (234 aa).

Residues 212 to 234 are disordered; it reads GKHLKLDSNTTENKTTKQNETGG. The segment covering 220 to 234 has biased composition (low complexity); that stretch reads NTTENKTTKQNETGG.

This is an uncharacterized protein from Methanothermobacter thermautotrophicus (Methanobacterium thermoformicicum).